The chain runs to 146 residues: VHWTAEEKQLITGLWGKVNVDECGAEALARLLIVYPWTQRFFASFGNLATASAITGNAMVHAHGKKVLTSFGEAVKNLDNIKNTFAQLSELHCDKLHVDPENFKLLGDILIIVLAAHFGKDFTPDCQAAWKKLVRVVAHALARKYH.

The 145-residue stretch at 2-146 (HWTAEEKQLI…VAHALARKYH (145 aa)) folds into the Globin domain. 2 residues coordinate heme b: His-63 and His-92.

It belongs to the globin family. In terms of assembly, heterotetramer of two alpha chains and two beta chains. As to expression, red blood cells.

Its function is as follows. Involved in oxygen transport from the lung to the various peripheral tissues. The chain is Hemoglobin subunit beta (HBB) from Ciconia ciconia (White stork).